The primary structure comprises 605 residues: Protein Spindly (605 aa).

Position 1 is an N-acetylmethionine (methionine 1). Residues 2–442 (EADIITNLRC…ELKLKYEPEE (441 aa)) adopt a coiled-coil conformation. A phosphoserine mark is found at serine 513, serine 515, and serine 555. Residues 544–580 (ALSERSGNTPNSPRLAAESKLQTEVKEGKETSSKLEK) are disordered. The span at 564-580 (LQTEVKEGKETSSKLEK) shows a compositional bias: basic and acidic residues.

Belongs to the Spindly family. Interacts with KNTC1 and ZW10. These interactions appear weak and may be transient or indirect. Interacts with dynein intermediate chain and dynactin (DCTN1). Interacts with the catalytically active form of USP45. Monoubiquitinated with'Lys-48' linkage. Deubiquitinated by USP45.

The protein localises to the cytoplasm. Its subcellular location is the cytoskeleton. It localises to the microtubule organizing center. It is found in the centrosome. The protein resides in the chromosome. The protein localises to the centromere. Its subcellular location is the kinetochore. It localises to the nucleus. It is found in the spindle pole. In terms of biological role, required for the localization of dynein and dynactin to the mitotic kintochore. Dynein is believed to control the initial lateral interaction between the kinetochore and spindle microtubules and to facilitate the subsequent formation of end-on kinetochore-microtubule attachments mediated by the NDC80 complex. Also required for correct spindle orientation. Does not appear to be required for the removal of spindle assembly checkpoint (SAC) proteins from the kinetochore upon bipolar spindle attachment. Acts as an adapter protein linking the dynein motor complex to various cargos and converts dynein from a non-processive to a highly processive motor in the presence of dynactin. Facilitates the interaction between dynein and dynactin and activates dynein processivity (the ability to move along a microtubule for a long distance without falling off the track). Plays a role in cell migration. The polypeptide is Protein Spindly (Homo sapiens (Human)).